The primary structure comprises 626 residues: Beta-galactosidase large subunit (626 aa).

E466 serves as the catalytic Proton donor. Catalysis depends on E534, which acts as the Nucleophile.

The protein belongs to the glycosyl hydrolase 2 family. As to quaternary structure, heterodimer of a large (LacL) and a small subunit (LacM).

It carries out the reaction Hydrolysis of terminal non-reducing beta-D-galactose residues in beta-D-galactosides.. Functionally, component of a beta-galactosidase that displays activity with the artificial chromogenic substrate o-nitrophenyl-beta-D-galactopyranoside (ONPG). This Leuconostoc lactis protein is Beta-galactosidase large subunit.